Here is a 569-residue protein sequence, read N- to C-terminus: Peroxisomal targeting signal receptor (569 aa).

Cys-5 is covalently cross-linked (Glycyl cysteine thioester (Cys-Gly) (interchain with G-Cter in ubiquitin)). Residues 6-28 are amphipathic helix 1 (AH1); sequence SVGANPLAQLNKRVQQDRTLQHG. Lys-17 participates in a covalent cross-link: Glycyl lysine isopeptide (Lys-Gly) (interchain with G-Cter in ubiquitin). The amphipathic helix 2 (AH2) stretch occupies residues 53-71; it reads KFQMEQFMAGKASSGGNMF. Positions 112–116 match the WxxxF/Y motif 1 motif; it reads WSQEF. The tract at residues 150 to 154 is amphipathic helix 3 (AH3); sequence PMNMM. The WxxxF/Y motif 2 motif lies at 181 to 185; that stretch reads WEQQF. The amphipathic helix 4 (AH4) stretch occupies residues 229–245; the sequence is FQQIWNDIHDQTDDLDS. 5 TPR repeats span residues 281-315, 316-349, 417-450, 452-484, and 486-518; these read NTDA…DPGH, VDAW…DPHN, PDVQ…RPDD, CMWN…KPTF, and RARY…HEVE.

The protein belongs to the peroxisomal targeting signal receptor family. As to quaternary structure, interacts (via WxxxF/Y and LVxEF motifs) with PEX14; promoting translocation through the PEX13-PEX14 docking complex. In terms of processing, monoubiquitinated at Cys-5 by PEX2 during PEX5 passage through the retrotranslocation channel: monoubiquitination acts as a signal for PEX5 extraction and is required for proper export from peroxisomes and recycling. When PEX5 recycling is compromised, polyubiquitinated at Lys-17 by PEX10 during its passage through the retrotranslocation channel, leading to its degradation.

The protein resides in the cytoplasm. It is found in the cytosol. Its subcellular location is the peroxisome matrix. Receptor that mediates peroxisomal import of proteins containing a C-terminal PTS1-type tripeptide peroxisomal targeting signal (SKL-type). Binds to cargo proteins containing a PTS1 peroxisomal targeting signal in the cytosol, and translocates them into the peroxisome matrix by passing through the PEX13-PEX14 docking complex along with cargo proteins. PEX5 receptor is then retrotranslocated into the cytosol, leading to release of bound cargo in the peroxisome matrix, and reset for a subsequent peroxisome import cycle. This Eremothecium gossypii (strain ATCC 10895 / CBS 109.51 / FGSC 9923 / NRRL Y-1056) (Yeast) protein is Peroxisomal targeting signal receptor (PEX5).